The chain runs to 185 residues: Photosystem I assembly protein Ycf4 (185 aa).

Transmembrane regions (helical) follow at residues 21–43 and 63–85; these read NFCW…TSSY and GLVM…CTIL.

This sequence belongs to the Ycf4 family.

Its subcellular location is the plastid. It is found in the chloroplast thylakoid membrane. Seems to be required for the assembly of the photosystem I complex. The sequence is that of Photosystem I assembly protein Ycf4 from Brassica oleracea (Wild cabbage).